The sequence spans 332 residues: Inositol 2-dehydrogenase 2 (332 aa).

It belongs to the Gfo/Idh/MocA family. As to quaternary structure, homotetramer.

It carries out the reaction myo-inositol + NAD(+) = scyllo-inosose + NADH + H(+). Functionally, involved in the oxidation of myo-inositol (MI) to 2-keto-myo-inositol (2KMI or 2-inosose). In Paenarthrobacter aurescens (strain TC1), this protein is Inositol 2-dehydrogenase 2.